A 222-amino-acid chain; its full sequence is Probable nicotinate-nucleotide adenylyltransferase (222 aa).

This sequence belongs to the NadD family.

It catalyses the reaction nicotinate beta-D-ribonucleotide + ATP + H(+) = deamido-NAD(+) + diphosphate. Its pathway is cofactor biosynthesis; NAD(+) biosynthesis; deamido-NAD(+) from nicotinate D-ribonucleotide: step 1/1. Functionally, catalyzes the reversible adenylation of nicotinate mononucleotide (NaMN) to nicotinic acid adenine dinucleotide (NaAD). The chain is Probable nicotinate-nucleotide adenylyltransferase from Pseudomonas syringae pv. tomato (strain ATCC BAA-871 / DC3000).